A 200-amino-acid chain; its full sequence is Claudin-11 (200 aa).

A topological domain (cytoplasmic) is located at residue M1. A helical membrane pass occupies residues 2–22 (VATCLQVVGFVTSFVGWIGVI). At 23 to 75 (VTTSTNDWVVTCGYTIPTCRKLDELGSKGLWADCVMATGLYHCKPLVDILPCR) the chain is on the extracellular side. The chain crosses the membrane as a helical span at residues 76-96 (ALMIAASVLGLPAILLLLTVL). The Cytoplasmic segment spans residues 97–115 (PCIRMGQEPGVAKYRRAQL). The helical transmembrane segment at 116–136 (AGVLLILLALCAIVATIWFPV) threads the bilayer. The Extracellular segment spans residues 137 to 150 (CAHRETTIVSFGYS). A helical transmembrane segment spans residues 151-171 (LYAGWIGAVLCLVGGCVILCC). Residues 172 to 200 (AGDAQAFGENRFYYTAGSSSPTHAKSAHV) are Cytoplasmic-facing. Phosphoserine is present on residues S190 and S191.

The protein belongs to the claudin family. As to quaternary structure, interacts with tetraspanin-3/TSPAN3. Interacts with OCLN.

Its subcellular location is the cell junction. It is found in the tight junction. The protein localises to the cell membrane. Its function is as follows. Plays a major role in tight junction-specific obliteration of the intercellular space, through calcium-independent cell-adhesion activity. This is Claudin-11 (CLDN11) from Pongo abelii (Sumatran orangutan).